The sequence spans 180 residues: Large ribosomal subunit protein uL6 (180 aa).

Belongs to the universal ribosomal protein uL6 family. As to quaternary structure, part of the 50S ribosomal subunit.

Its function is as follows. This protein binds to the 23S rRNA, and is important in its secondary structure. It is located near the subunit interface in the base of the L7/L12 stalk, and near the tRNA binding site of the peptidyltransferase center. This chain is Large ribosomal subunit protein uL6, found in Clostridium beijerinckii (strain ATCC 51743 / NCIMB 8052) (Clostridium acetobutylicum).